The sequence spans 281 residues: Apulose-4-phosphate transketolase subunit A (281 aa).

The protein belongs to the transketolase family. Probable heterodimer composed of AptA and AptB. Requires thiamine diphosphate as cofactor.

It carries out the reaction apulose 4-phosphate + D-glyceraldehyde 3-phosphate = D-xylulose 5-phosphate + dihydroxyacetone phosphate. Its pathway is carbohydrate metabolism. Involved in catabolism of D-apiose. Catalyzes the transfer of the glycolaldehyde group from apulose-4-phosphate to D-glyceraldehyde 3-phosphate, generating dihydroxyacetone phosphate and D-xylulose-5-phosphate. In Phocaeicola vulgatus (strain ATCC 8482 / DSM 1447 / JCM 5826 / CCUG 4940 / NBRC 14291 / NCTC 11154) (Bacteroides vulgatus), this protein is Apulose-4-phosphate transketolase subunit A.